The primary structure comprises 351 residues: Anthranilate phosphoribosyltransferase (351 aa).

5-phospho-alpha-D-ribose 1-diphosphate contacts are provided by residues Gly-80, 83-84 (GD), Thr-88, 90-93 (NIST), 108-116 (KHGNRSVTS), and Ser-120. Gly-80 is an anthranilate binding site. Ser-92 is a Mg(2+) binding site. Asn-111 contributes to the anthranilate binding site. Arg-166 contributes to the anthranilate binding site. Residues Asp-229 and Glu-230 each coordinate Mg(2+).

It belongs to the anthranilate phosphoribosyltransferase family. Homodimer. Mg(2+) serves as cofactor.

It carries out the reaction N-(5-phospho-beta-D-ribosyl)anthranilate + diphosphate = 5-phospho-alpha-D-ribose 1-diphosphate + anthranilate. The protein operates within amino-acid biosynthesis; L-tryptophan biosynthesis; L-tryptophan from chorismate: step 2/5. Functionally, catalyzes the transfer of the phosphoribosyl group of 5-phosphorylribose-1-pyrophosphate (PRPP) to anthranilate to yield N-(5'-phosphoribosyl)-anthranilate (PRA). The chain is Anthranilate phosphoribosyltransferase from Chlorobium chlorochromatii (strain CaD3).